The following is a 143-amino-acid chain: Actin-depolymerizing factor 5 (143 aa).

The ADF-H domain occupies 11–143 (GMRVTDECTS…GFDIIQDRAK (133 aa)).

This sequence belongs to the actin-binding proteins ADF family. In terms of tissue distribution, expressed exclusively in root tip meristem.

It is found in the cytoplasm. The protein resides in the cytoskeleton. In terms of biological role, actin-depolymerizing protein. Severs actin filaments (F-actin) and binds to actin monomers. The polypeptide is Actin-depolymerizing factor 5 (ADF5) (Arabidopsis thaliana (Mouse-ear cress)).